Reading from the N-terminus, the 1171-residue chain is MASGSRATPTRSPSSARPAAPRHQHHHSQSSGGSTSRAGGGGGGGGGGGGGAAAAESVSKAVAQYTLDARLHAVFEQSGASGRSFDYTQSLRASPTPSSEQQIAAYLSRIQRGGHIQPFGCTLAVADDSSFRLLAYSENTADLLDLSPHHSVPSLDSSAVPPPVSLGADARLLFAPSSAVLLERAFAAREISLLNPLWIHSRVSSKPFYAILHRIDVGVVIDLEPARTEDPALSIAGAVQSQKLAVRAISRLQALPGGDVKLLCDTVVEYVRELTGYDRVMVYRFHEDEHGEVVAESRRNNLEPYIGLHYPATDIPQASRFLFRQNRVRMIADCHAAPVRVIQDPALTQPLCLVGSTLRSPHGCHAQYMANMGSIASLVMAVIISSGGDDDHNISRGSIPSAMKLWGLVVCHHTSPRCIPFPLRYACEFLMQAFGLQLNMELQLAHQLSEKHILRTQTLLCDMLLRDSPTGIVTQSPSIMDLVKCDGAALYYHGKYYPLGVTPTEVQIKDIIEWLTMCHGDSTGLSTDSLADAGYPGAAALGDAVSGMAVAYITPSDYLFWFRSHTAKEIKWGGAKHHPEDKDDGQRMHPRSSFKAFLEVVKSRSLPWENAEMDAIHSLQLILRDSFRDSAEGTSNSKAIVNGQVQLGELELRGIDELSSVAREMVRLIETATVPIFAVDTDGCINGWNAKVAELTGLSVEEAMGKSLVNDLIFKESEETVNKLLSRALRGDEDKNVEIKLKTFGPEQSKGPIFVIVNACSSRDYTKNIVGVCFVGQDVTGQKVVMDKFINIQGDYKAIVHNPNPLIPPIFASDENTCCSEWNTAMEKLTGWSRGEVVGKLLVGEVFGNCCRLKGPDALTKFMIVLHNAIGGQDCEKFPFSFFDKNGKYVQALLTANTRSRMDGEAIGAFCFLQIASPELQQAFEIQRHHEKKCYARMKELAYIYQEIKNPLNGIRFTNSLLEMTDLKDDQRQFLETSTACEKQMSKIVKDASLQSIEDGSLVLEKGEFSLGSVMNAVVSQVMIQLRERDLQLIRDIPDEIKEASAYGDQYRIQQVLCDFLLSMVRFAPAENGWVEIQVRPNIKQNSDGTDTMLFLFRFACPGEGLPPEIVQDMFSNSRWTTQEGIGLSICRKILKLMGGEVQYIRESERSFFHIVLELPQPQQAASRGTS.

Over residues 1 to 19 (MASGSRATPTRSPSSARPA) the composition is skewed to low complexity. Residues 1–53 (MASGSRATPTRSPSSARPAAPRHQHHHSQSSGGSTSRAGGGGGGGGGGGGGAA) form a disordered region. Residues 38–52 (AGGGGGGGGGGGGGA) show a composition bias toward gly residues. A GAF domain is found at 259 to 442 (DVKLLCDTVV…AFGLQLNMEL (184 aa)). Cysteine 364 contacts phytochromobilin. PAS domains follow at residues 661 to 732 (VARE…LRGD) and 795 to 866 (DYKA…MIVL). The Histidine kinase domain maps to 943 to 1161 (YIYQEIKNPL…FFHIVLELPQ (219 aa)).

Belongs to the phytochrome family. In terms of assembly, homodimer. In terms of processing, contains one covalently linked phytochromobilin chromophore.

Regulatory photoreceptor which exists in two forms that are reversibly interconvertible by light: the Pr form that absorbs maximally in the red region of the spectrum and the Pfr form that absorbs maximally in the far-red region. Photoconversion of Pr to Pfr induces an array of morphogenic responses, whereas reconversion of Pfr to Pr cancels the induction of those responses. Pfr controls the expression of a number of nuclear genes including those encoding the small subunit of ribulose-bisphosphate carboxylase, chlorophyll A/B binding protein, protochlorophyllide reductase, rRNA, etc. It also controls the expression of its own gene(s) in a negative feedback fashion. The protein is Phytochrome B (PHYB) of Oryza sativa subsp. japonica (Rice).